The sequence spans 442 residues: tRNA-2-methylthio-N(6)-dimethylallyladenosine synthase (442 aa).

The MTTase N-terminal domain occupies 5–122 (KRIFIKTFGC…LPDMIESKRR (118 aa)). [4Fe-4S] cluster contacts are provided by Cys14, Cys51, Cys85, Cys159, Cys163, and Cys166. Residues 145 to 377 (RVEGAAAFLS…QALNEAQGKA (233 aa)) form the Radical SAM core domain. The TRAM domain maps to 380-442 (ASMVGSIQRV…LSHTLRGELV (63 aa)).

The protein belongs to the methylthiotransferase family. MiaB subfamily. As to quaternary structure, monomer. [4Fe-4S] cluster serves as cofactor.

Its subcellular location is the cytoplasm. The enzyme catalyses N(6)-dimethylallyladenosine(37) in tRNA + (sulfur carrier)-SH + AH2 + 2 S-adenosyl-L-methionine = 2-methylsulfanyl-N(6)-dimethylallyladenosine(37) in tRNA + (sulfur carrier)-H + 5'-deoxyadenosine + L-methionine + A + S-adenosyl-L-homocysteine + 2 H(+). In terms of biological role, catalyzes the methylthiolation of N6-(dimethylallyl)adenosine (i(6)A), leading to the formation of 2-methylthio-N6-(dimethylallyl)adenosine (ms(2)i(6)A) at position 37 in tRNAs that read codons beginning with uridine. In Methylobacillus flagellatus (strain ATCC 51484 / DSM 6875 / VKM B-1610 / KT), this protein is tRNA-2-methylthio-N(6)-dimethylallyladenosine synthase.